Here is a 220-residue protein sequence, read N- to C-terminus: Glycerol-3-phosphate acyltransferase (220 aa).

6 consecutive transmembrane segments (helical) span residues 11–31, 70–90, 96–116, 127–147, 153–173, and 192–212; these read INVI…GYAL, LLVL…SKLF, LQWM…FLNF, GSVV…WFFV, ISSL…FFVP, and PMVL…FNLL.

Belongs to the PlsY family. Probably interacts with PlsX.

The protein localises to the cell inner membrane. It carries out the reaction an acyl phosphate + sn-glycerol 3-phosphate = a 1-acyl-sn-glycero-3-phosphate + phosphate. The protein operates within lipid metabolism; phospholipid metabolism. Its function is as follows. Catalyzes the transfer of an acyl group from acyl-phosphate (acyl-PO(4)) to glycerol-3-phosphate (G3P) to form lysophosphatidic acid (LPA). This enzyme utilizes acyl-phosphate as fatty acyl donor, but not acyl-CoA or acyl-ACP. The polypeptide is Glycerol-3-phosphate acyltransferase (Helicobacter pylori (strain J99 / ATCC 700824) (Campylobacter pylori J99)).